Here is a 353-residue protein sequence, read N- to C-terminus: Photosystem II protein D1 (353 aa).

Position 2 is an N-acetylthreonine (threonine 2). A Phosphothreonine modification is found at threonine 2. A run of 3 helical transmembrane segments spans residues 29–46, 118–133, and 142–156; these read YIGWFGVLMIPTLLTATS, HFLLGVACYMGREWEL, and WIAVAYSAPVAAATA. Histidine 118 contributes to the chlorophyll a binding site. Position 126 (tyrosine 126) interacts with pheophytin a. Aspartate 170 and glutamate 189 together coordinate [CaMn4O5] cluster. A helical membrane pass occupies residues 197 to 218; the sequence is FHMLGVAGVFGGSLFSAMHGSL. Histidine 198 lines the chlorophyll a pocket. A quinone is bound by residues histidine 215 and 264–265; that span reads SF. Histidine 215 contributes to the Fe cation binding site. Histidine 272 provides a ligand contact to Fe cation. Residues 274-288 form a helical membrane-spanning segment; that stretch reads FLAAWPVVGIWFTAL. The [CaMn4O5] cluster site is built by histidine 332, glutamate 333, aspartate 342, and alanine 344. Residues 345-353 constitute a propeptide that is removed on maturation; that stretch reads AVEAPSING.

It belongs to the reaction center PufL/M/PsbA/D family. As to quaternary structure, PSII is composed of 1 copy each of membrane proteins PsbA, PsbB, PsbC, PsbD, PsbE, PsbF, PsbH, PsbI, PsbJ, PsbK, PsbL, PsbM, PsbT, PsbX, PsbY, PsbZ, Psb30/Ycf12, at least 3 peripheral proteins of the oxygen-evolving complex and a large number of cofactors. It forms dimeric complexes. It depends on The D1/D2 heterodimer binds P680, chlorophylls that are the primary electron donor of PSII, and subsequent electron acceptors. It shares a non-heme iron and each subunit binds pheophytin, quinone, additional chlorophylls, carotenoids and lipids. D1 provides most of the ligands for the Mn4-Ca-O5 cluster of the oxygen-evolving complex (OEC). There is also a Cl(-1) ion associated with D1 and D2, which is required for oxygen evolution. The PSII complex binds additional chlorophylls, carotenoids and specific lipids. as a cofactor. Post-translationally, tyr-161 forms a radical intermediate that is referred to as redox-active TyrZ, YZ or Y-Z. In terms of processing, C-terminally processed by CTPA; processing is essential to allow assembly of the oxygen-evolving complex and thus photosynthetic growth.

The protein resides in the plastid. It is found in the chloroplast thylakoid membrane. It carries out the reaction 2 a plastoquinone + 4 hnu + 2 H2O = 2 a plastoquinol + O2. Functionally, photosystem II (PSII) is a light-driven water:plastoquinone oxidoreductase that uses light energy to abstract electrons from H(2)O, generating O(2) and a proton gradient subsequently used for ATP formation. It consists of a core antenna complex that captures photons, and an electron transfer chain that converts photonic excitation into a charge separation. The D1/D2 (PsbA/PsbD) reaction center heterodimer binds P680, the primary electron donor of PSII as well as several subsequent electron acceptors. The polypeptide is Photosystem II protein D1 (Lotus japonicus (Lotus corniculatus var. japonicus)).